A 560-amino-acid chain; its full sequence is Endogenous retrovirus group K member 18 Env polyprotein (560 aa).

A fusion peptide region spans residues 355–375; that stretch reads FIFTLIAVIMGLIAVTATAAV. The chain crosses the membrane as a helical span at residues 522-542; that stretch reads IRSTMIINLILIVVCLFCLLL.

This sequence belongs to the beta type-B retroviral envelope protein family. HERV class-II K(HML-2) env subfamily. As to quaternary structure, the surface (SU) and transmembrane (TM) proteins form a heterodimer. SU and TM are attached by noncovalent interactions or by a labile interchain disulfide bond. Post-translationally, specific enzymatic cleavages in vivo yield the mature SU and TM proteins. As to expression, expressed at higher level in the thymus. Expressed at lower level in peripheral blood lymphocytes.

It is found in the cell membrane. The protein resides in the virion. Functionally, retroviral envelope proteins mediate receptor recognition and membrane fusion during early infection. Endogenous envelope proteins may have kept, lost or modified their original function during evolution. This envelope protein has superantigenic properties. SU mediates receptor recognition. Its function is as follows. TM anchors the envelope heterodimer to the viral membrane through one transmembrane domain. The other hydrophobic domain, called fusion peptide, mediates fusion of the viral membrane with the target cell membrane. This chain is Endogenous retrovirus group K member 18 Env polyprotein (ERVK-18), found in Homo sapiens (Human).